The following is a 377-amino-acid chain: Chaperone protein DnaJ (377 aa).

The 66-residue stretch at 5-70 (DFYEVLGVER…SKRAAYDQYG (66 aa)) folds into the J domain. Residues 136-214 (GTTVTIRVPT…CHGQGRVEEQ (79 aa)) form a CR-type zinc finger. Zn(2+) contacts are provided by cysteine 149, cysteine 152, cysteine 166, cysteine 169, cysteine 188, cysteine 191, cysteine 202, and cysteine 205. CXXCXGXG motif repeat units follow at residues 149–156 (CKTCNGSG), 166–173 (CTTCGGIG), 188–195 (CPRCHGTG), and 202–209 (CGSCHGQG).

This sequence belongs to the DnaJ family. As to quaternary structure, homodimer. The cofactor is Zn(2+).

The protein resides in the cytoplasm. In terms of biological role, participates actively in the response to hyperosmotic and heat shock by preventing the aggregation of stress-denatured proteins and by disaggregating proteins, also in an autonomous, DnaK-independent fashion. Unfolded proteins bind initially to DnaJ; upon interaction with the DnaJ-bound protein, DnaK hydrolyzes its bound ATP, resulting in the formation of a stable complex. GrpE releases ADP from DnaK; ATP binding to DnaK triggers the release of the substrate protein, thus completing the reaction cycle. Several rounds of ATP-dependent interactions between DnaJ, DnaK and GrpE are required for fully efficient folding. Also involved, together with DnaK and GrpE, in the DNA replication of plasmids through activation of initiation proteins. This Pseudomonas aeruginosa (strain LESB58) protein is Chaperone protein DnaJ.